Reading from the N-terminus, the 490-residue chain is Ribulose bisphosphate carboxylase large chain (490 aa).

Positions 127 and 177 each coordinate substrate. The active-site Proton acceptor is the lysine 179. Position 181 (lysine 181) interacts with substrate. Mg(2+)-binding residues include lysine 205, aspartate 207, and glutamate 208. N6-carboxylysine is present on lysine 205. Catalysis depends on histidine 297, which acts as the Proton acceptor. Positions 298, 330, and 382 each coordinate substrate.

Belongs to the RuBisCO large chain family. Type I subfamily. In terms of assembly, heterohexadecamer of 8 large chains and 8 small chains. Mg(2+) serves as cofactor.

Its subcellular location is the plastid. The protein resides in the chloroplast. The enzyme catalyses 2 (2R)-3-phosphoglycerate + 2 H(+) = D-ribulose 1,5-bisphosphate + CO2 + H2O. It catalyses the reaction D-ribulose 1,5-bisphosphate + O2 = 2-phosphoglycolate + (2R)-3-phosphoglycerate + 2 H(+). Functionally, ruBisCO catalyzes two reactions: the carboxylation of D-ribulose 1,5-bisphosphate, the primary event in carbon dioxide fixation, as well as the oxidative fragmentation of the pentose substrate in the photorespiration process. Both reactions occur simultaneously and in competition at the same active site. The sequence is that of Ribulose bisphosphate carboxylase large chain from Phaeodactylum tricornutum (strain CCAP 1055/1).